We begin with the raw amino-acid sequence, 2109 residues long: MAPVALRDLAESPELEGTEVVSMKARSSPPLTPPSPPCLVTDYIRHQVESNPDAPAVQCEQEQPYSYAALWQLVEHIAAAGQFRAGRIMPLCMDPSVEFVATVLAILRAGSAYVILDPEGSAQRNRVIAEDCGCEPVIVHEKYAAFFDHSVTIESIQSIQNHGQLDPPSITPSDLAYLIYTSGSTGTPKGVLLSHRAVSHGIDQFQLNGRKRWLLFYNPIFSAAQRTILATLSKGACLCLTRRDRLATALPEVLNNLQIDALGITPSALALLSPGETPACLQQITTVGEPLSQSLVNKWADRVHLRVSYGLSECAQLNFSRQLQPGDNPRNPGLPSDTTTAIVLEPGTMTRLSVNEPGELCLYGPQVANGYHQRQKETQAAFVKAPKDTHGTMMFRTGDLAVQREDGTFEILGRIDHQVKIHGQRVEPEEVAAKLATVKGVASLACVGCYINERMSLVAAIVPSPEADWGTLVQYLRDHARQSFPPYMVPSYWMSCTEFPTNQNGKVDFRAIRRLAESTEVSKMLGHSTSPKDGATAGLSETASKIAQVWAAVLNLPASSIIPSDSLVALGGTSIDAIRAIRELKGHGIHVELADMLQAHTIEEIADTVQLDSSPTHVSNEPAAPFDYISDAVLKADLLADRRVVDAYPVTALQEGILASTLQGSQDYLYQRVFDVRHLDLVRLQLAFQVVFWRTELLKSTFVAAAKGFLQVVRNDFNLPWSEVSLSLSEYLEQDKNNGVTLGEPFMRVAVLDRSILVVSVHHALFDFWSHRFLFDDVARVYYGRRPEKRPEWKSFVGLLHTRDTKASQDFWREHLGEAVPTVLNYAPVTKTSTARRTVSQEVRAASSALRAPLGAIIHAAWALVLSSHIASKSVTMATAVSGRELPVPGIEALNGPTLAVVPYAIAIDSEQTLQQLVQSVNTSLWKVIKHSQVGVRNALAAAERQGTTLFDTMVNILVNGKVNDDISKEVFQLYGRRPVWRTEYTTLNVEEGATGIDVTLTSPMEEHRLEFILEQFCMALNLIASNPRQTVKATNLVSETELQFMLQSHKNLPDATRTLNGQFEATVRTYPNRTAINYQNEQFLTYAELDSEANRMTHYLSELGVVPGDIVPLLLEKSPLMIKAILALFKLGAAYVPLSPENPLERNAYIARDVSAKFVLTEKEHEAYFASESDIPSVLLDQANLSQYGPEPQLVTVSPDALAYLLYTSGSTGLPKGVMVTHGACAAAMQSIIEFEHRQGQESRMLQFSNYVFDVSLYDFFVALHSGGTLCIAPSERLLNNLAEVINEMNVNHVFLTPTVARLLNPKDVPNLESMTVGGEQLTRDVVTTWASRVTLRNGYGPTEASVLVTMKDVDTDTTGGNIGRPLASVGAIVLEADGVRPVPYGAVGELCFFGPQLAQGYFKKPDITSAAFIESEVLNGRRLYRSGDLARYLPNGDIECLGRKDDQVKINGHRIELGEIEQAFLRTGEIKDCVLTVWKHNSTAHLVAVAVFDGASSEKPGEVLPLDGFAENVQRVRSKLTGLTPYMIPKAIVPLSSLPRLPSGKANRKQLKAMVQSLSQGELTKFSFDKVGAAQSKGAVIPLASETQKVLQQGWIETLQLADDDFGLEADFLSLGGDSIAAINLVSWLRRKQLKISVRDVLKYTSLGAMADQLKGESGDAHQIQKKTFTPPSEIDAAISAAGLQATEYEYIYPCPPGQAEFLTQGAHPEALWSLMTVRKVGSDFAPRQWIDLVRQLTTTNEILRTTFTRCHGNWYGVVLRDATPVVEIYEDVSNEQRQQIIKSLDDYRFVFGKPFIRYAILHLSTGETEIVTKLDHGLYDGTLLRIFGEHFQAYQDNVPVDRFTSFKDFAFHIWQMDKSRTLSFWKQSEKRPIAFEFPSSSGTEPRINSVHVHTINLEFDAFAKSTGATVSIIFQSIFQLWLALRSNQRDVAFDYLYTGRNIDLPDPQTINGTCANFLPMRSKVDPSMPVSEFLRQTQDEFWQYTENSTVGMDEIHEACETTREGFSNKTLFLFQPFEPAPATAKQYEKWIVMAKSQVTMPQPYAVVFEVVKTADVNEYKLKFAFDKRVYEKEQVQGEAQVIEKLLAKVMENAEASVGDVLGSFRS.

The segment at 31 to 512 (LTPPSPPCLV…QNGKVDFRAI (482 aa)) is adenylation 1. Positions 537 to 613 (AGLSETASKI…EIADTVQLDS (77 aa)) constitute a Carrier 1 domain. Residue S574 is modified to O-(pantetheine 4'-phosphoryl)serine. Positions 646–908 (DAYPVTALQE…LAVVPYAIAI (263 aa)) are condensation 1. The interval 1058–1555 (RTLNGQFEAT…GKANRKQLKA (498 aa)) is adenylation 2. The Carrier 2 domain maps to 1584–1660 (PLASETQKVL…AMADQLKGES (77 aa)). The residue at position 1621 (S1621) is an O-(pantetheine 4'-phosphoryl)serine. The tract at residues 1695–1968 (YPCPPGQAEF…NFLPMRSKVD (274 aa)) is condensation 2.

It belongs to the NRP synthetase family.

Its pathway is siderophore biosynthesis. Its function is as follows. Nonribosomal peptide synthetase; part of the siderophore biosynthetic pathway. Aspergillus fumigatus produces four types of siderophores, low-molecular-mass iron chelators, including excreted fusarinine C (FsC) and triacetylfusarinine C (TAFC) for iron uptake and intacellular ferricrocin (FC) for hyphal and hydroxyferricrocin (HFC) for conidial iron distribution and storage. TAFC consists of three N(2)-acetyl-N(5)-anhydromevalonyl-N(5)-hydroxyornithine residues cyclically linked by ester bonds; FC is a cyclic hexapeptide with the structure Gly-Ser-Gly-(N(5)-acetyl-N(5)-hydroxyornithine)x3. The biosynthesis of all four siderophores depends on the hydroxylation of ornithine, catalyzed by the monooxygenase sidA. Subsequently, the pathways for biosynthesis of extra- and intracellular siderophores split. For biosynthesis of extracellular siderophores, the transacylase sidF transfers anhydromevalonyl to N(5)-hydroxyornithine. The required anhydromevalonyl-CoA moiety is derived from mevalonate by CoA ligation and dehydration catalyzed by sidI and sidH respectively. The acetylation of N(5)-hydroxyornithine for FC biosynthesis involves the constitutively expressed sidL. FC is hydroxylated to HFC by an as yet uncharacterized enzyme during conidiation. Assembly of fusarinine C (FsC) and FC is catalyzed by two different nonribosomal peptide synthetases (NRPS), sidD and sidC respectively. Subsequently, sidG catalyzes N2-acetylation of FsC for forming TAFC. Both extra- and intracellular siderophores are crucial for growth during iron limitation and virulence. This Aspergillus fumigatus (strain ATCC MYA-4609 / CBS 101355 / FGSC A1100 / Af293) (Neosartorya fumigata) protein is Nonribosomal peptide synthetase sidE.